Reading from the N-terminus, the 144-residue chain is Ribosomal RNA large subunit methyltransferase H (144 aa).

S-adenosyl-L-methionine is bound by residues Leu63, Gly92, and 111 to 116 (LSPMTF).

Belongs to the RNA methyltransferase RlmH family. Homodimer.

The protein localises to the cytoplasm. The catalysed reaction is pseudouridine(1915) in 23S rRNA + S-adenosyl-L-methionine = N(3)-methylpseudouridine(1915) in 23S rRNA + S-adenosyl-L-homocysteine + H(+). Its function is as follows. Specifically methylates the pseudouridine at position 1915 (m3Psi1915) in 23S rRNA. The chain is Ribosomal RNA large subunit methyltransferase H from Synechococcus sp. (strain CC9605).